The following is a 261-amino-acid chain: Cytochrome c oxidase subunit 3 (261 aa).

At M1–P15 the chain is on the mitochondrial matrix side. The chain crosses the membrane as a helical span at residues W16–W34. The Mitochondrial intermembrane portion of the chain corresponds to F35–T40. A helical transmembrane segment spans residues T41–T66. Residues F67 to T72 are Mitochondrial matrix-facing. A helical transmembrane segment spans residues P73–S105. The Mitochondrial intermembrane segment spans residues L106 to E128. A helical transmembrane segment spans residues V129–M152. Over E153–E155 the chain is Mitochondrial matrix. Residues R156–D183 traverse the membrane as a helical segment. The Mitochondrial intermembrane portion of the chain corresponds to A184 to D190. Residues G191–I223 form a helical membrane-spanning segment. At R224–H232 the chain is on the mitochondrial matrix side. The helical transmembrane segment at F233–I256 threads the bilayer. The Mitochondrial intermembrane portion of the chain corresponds to Y257–S261.

This sequence belongs to the cytochrome c oxidase subunit 3 family. As to quaternary structure, component of the cytochrome c oxidase (complex IV, CIV), a multisubunit enzyme composed of 14 subunits. The complex is composed of a catalytic core of 3 subunits MT-CO1, MT-CO2 and MT-CO3, encoded in the mitochondrial DNA, and 11 supernumerary subunits COX4I, COX5A, COX5B, COX6A, COX6B, COX6C, COX7A, COX7B, COX7C, COX8 and NDUFA4, which are encoded in the nuclear genome. The complex exists as a monomer or a dimer and forms supercomplexes (SCs) in the inner mitochondrial membrane with NADH-ubiquinone oxidoreductase (complex I, CI) and ubiquinol-cytochrome c oxidoreductase (cytochrome b-c1 complex, complex III, CIII), resulting in different assemblies (supercomplex SCI(1)III(2)IV(1) and megacomplex MCI(2)III(2)IV(2)).

The protein resides in the mitochondrion inner membrane. The enzyme catalyses 4 Fe(II)-[cytochrome c] + O2 + 8 H(+)(in) = 4 Fe(III)-[cytochrome c] + 2 H2O + 4 H(+)(out). Its function is as follows. Component of the cytochrome c oxidase, the last enzyme in the mitochondrial electron transport chain which drives oxidative phosphorylation. The respiratory chain contains 3 multisubunit complexes succinate dehydrogenase (complex II, CII), ubiquinol-cytochrome c oxidoreductase (cytochrome b-c1 complex, complex III, CIII) and cytochrome c oxidase (complex IV, CIV), that cooperate to transfer electrons derived from NADH and succinate to molecular oxygen, creating an electrochemical gradient over the inner membrane that drives transmembrane transport and the ATP synthase. Cytochrome c oxidase is the component of the respiratory chain that catalyzes the reduction of oxygen to water. Electrons originating from reduced cytochrome c in the intermembrane space (IMS) are transferred via the dinuclear copper A center (CU(A)) of subunit 2 and heme A of subunit 1 to the active site in subunit 1, a binuclear center (BNC) formed by heme A3 and copper B (CU(B)). The BNC reduces molecular oxygen to 2 water molecules using 4 electrons from cytochrome c in the IMS and 4 protons from the mitochondrial matrix. The sequence is that of Cytochrome c oxidase subunit 3 (mt-co3) from Gadus morhua (Atlantic cod).